The following is a 360-amino-acid chain: Phenylalanine--tRNA ligase alpha subunit (360 aa).

Glu-260 lines the Mg(2+) pocket.

This sequence belongs to the class-II aminoacyl-tRNA synthetase family. Phe-tRNA synthetase alpha subunit type 1 subfamily. Tetramer of two alpha and two beta subunits. Mg(2+) serves as cofactor.

The protein resides in the cytoplasm. The catalysed reaction is tRNA(Phe) + L-phenylalanine + ATP = L-phenylalanyl-tRNA(Phe) + AMP + diphosphate + H(+). The chain is Phenylalanine--tRNA ligase alpha subunit from Methylobacterium nodulans (strain LMG 21967 / CNCM I-2342 / ORS 2060).